The chain runs to 127 residues: Histone H2B type 1-A (127 aa).

The tract at residues 1–32 (MPEVSAKGTTISKKGFKKAVTKTQKKEGRKRK) is disordered. Pro-2 bears the N-acetylproline mark. 7 positions are modified to N6-acetyllysine; alternate: Lys-7, Lys-13, Lys-14, Lys-17, Lys-18, Lys-22, and Lys-25. 8 positions are modified to N6-crotonyllysine; alternate: Lys-7, Lys-13, Lys-14, Lys-17, Lys-18, Lys-22, Lys-25, and Lys-36. N6-lactoyllysine; alternate is present on residues Lys-7 and Lys-13. Lys-7 participates in a covalent cross-link: Glycyl lysine isopeptide (Lys-Gly) (interchain with G-Cter in SUMO2); alternate. Residues Lys-17, Lys-18, Lys-22, and Lys-25 each carry the N6-lactoyllysine; alternate modification. Lys-22 is covalently cross-linked (Glycyl lysine isopeptide (Lys-Gly) (interchain with G-Cter in SUMO2); alternate). Lys-36 carries the post-translational modification N6-succinyllysine; alternate. A Glycyl lysine isopeptide (Lys-Gly) (interchain with G-Cter in ubiquitin); alternate cross-link involves residue Lys-36. Ser-38 carries the phosphoserine modification. The residue at position 45 (Lys-45) is an N6-lactoyllysine; alternate. At Lys-48 the chain carries N6-methyllysine. Lys-59 carries the post-translational modification N6,N6-dimethyllysine. Position 81 is a dimethylated arginine (Arg-81). An N6-acetyllysine; alternate modification is found at Lys-87. Residue Lys-87 is modified to N6-lactoyllysine; alternate. Lys-87 is modified (N6,N6,N6-trimethyllysine; alternate). Omega-N-methylarginine occurs at positions 88 and 94. N6-lactoyllysine; alternate is present on Lys-110. Lys-110 bears the N6-methyllysine mark. Phosphothreonine is present on Thr-117. N6-lactoyllysine; alternate occurs at positions 118 and 122. An N6-succinyllysine; alternate mark is found at Lys-118 and Lys-122. N6-methylated lysine; alternate is present on Lys-118. Lys-122 participates in a covalent cross-link: Glycyl lysine isopeptide (Lys-Gly) (interchain with G-Cter in ubiquitin); alternate.

Belongs to the histone H2B family. As to quaternary structure, the nucleosome is a histone octamer containing two molecules each of H2A, H2B, H3 and H4 assembled in one H3-H4 heterotetramer and two H2A-H2B heterodimers. Post-translationally, monoubiquitination at Lys-36 by the MSL1/MSL2 dimer is required for histone H3 'Lys-4' (H3K4me) and 'Lys-79' (H3K79me) methylation and transcription activation at specific gene loci, such as HOXA9 and MEIS1 loci. Similarly, monoubiquitination of Lys-122 (H2BK120Ub) by the RNF20/40 complex gives a specific tag for epigenetic transcriptional activation and is also prerequisite for histone H3 'Lys-4' and 'Lys-79' methylation. It also functions cooperatively with the FACT dimer to stimulate elongation by RNA polymerase II. H2BK120Ub also acts as a regulator of mRNA splicing: deubiquitination by USP49 is required for efficient cotranscriptional splicing of a large set of exons. In terms of processing, crotonylation (Kcr) is specifically present in male germ cells and marks testis-specific genes in post-meiotic cells, including X-linked genes that escape sex chromosome inactivation in haploid cells. Crotonylation marks active promoters and enhancers and confers resistance to transcriptional repressors. It is also associated with post-meiotically activated genes on autosomes. Acetylated during spermatogenesis. Acetylated form is most abundant in spermatogonia compared to spermatocytes and round spermatids. Post-translationally, phosphorylated at Thr-117 in spermatogonia, spermatocytes and round spermatids. In terms of processing, methylated at Lys-118 in spermatogonia, spermatocytes and round spermatids. Lactylated in macrophages by EP300/P300 by using lactoyl-CoA directly derived from endogenous or exogenous lactate, leading to stimulates gene transcription. As to expression, testis. Expressed in pachytene spermatocytes during meiotic prophase I in the absence of any significant DNA synthesis.

The protein localises to the nucleus. Its subcellular location is the chromosome. In terms of biological role, variant histone specifically required to direct the transformation of dissociating nucleosomes to protamine in male germ cells. Entirely replaces classical histone H2B prior nucleosome to protamine transition and probably acts as a nucleosome dissociating factor that creates a more dynamic chromatin, facilitating the large-scale exchange of histones. Core component of nucleosome. Nucleosomes wrap and compact DNA into chromatin, limiting DNA accessibility to the cellular machineries which require DNA as a template. Histones thereby play a central role in transcription regulation, DNA repair, DNA replication and chromosomal stability. DNA accessibility is regulated via a complex set of post-translational modifications of histones, also called histone code, and nucleosome remodeling. The polypeptide is Histone H2B type 1-A (Rattus norvegicus (Rat)).